We begin with the raw amino-acid sequence, 235 residues long: Kinetochore protein Spc25 (235 aa).

Positions 44–106 form a coiled coil; it reads KNILSAKEAI…DMEAQLLRHT (63 aa). Residues 193 to 216 form a disordered region; the sequence is EVAGASPVTPSGSERPKATSKHSN.

It belongs to the SPC25 family. Component of the Ndc80 complex, which is composed of Ndc80, Nuf2 and Spc25.

The protein resides in the nucleus. It is found in the chromosome. The protein localises to the centromere. Its subcellular location is the kinetochore. Acts as a component of the essential kinetochore-associated Ndc80 complex, which is required for chromosome segregation and spindle checkpoint activity during meiosis and mitosis. Required for kinetochore integrity and the organization of stable microtubule binding sites in the outer plate of the kinetochore. Participates in SAC signaling that responds specifically to disruptions in spindle microtubule dynamics. The NDC80 complex synergistically enhances the affinity of the SKA1 complex for microtubules and may allow the NDC80 complex to track depolymerizing microtubules. In Drosophila pseudoobscura pseudoobscura (Fruit fly), this protein is Kinetochore protein Spc25.